A 91-amino-acid polypeptide reads, in one-letter code: UPF0335 protein BBta_6866 (91 aa).

This sequence belongs to the UPF0335 family.

This Bradyrhizobium sp. (strain BTAi1 / ATCC BAA-1182) protein is UPF0335 protein BBta_6866.